The sequence spans 488 residues: Protein nucleotidyltransferase YdiU (488 aa).

Residues G91, G93, R94, K114, D126, G127, R177, and R184 each contribute to the ATP site. Positions 108–127 (RFDIQLKGSGPTPYSRRGDG) are disordered. D253 (proton acceptor) is an active-site residue. N254 and D263 together coordinate Mg(2+). D263 is an ATP binding site.

This sequence belongs to the SELO family. Mg(2+) is required as a cofactor. Requires Mn(2+) as cofactor.

It catalyses the reaction L-seryl-[protein] + ATP = 3-O-(5'-adenylyl)-L-seryl-[protein] + diphosphate. It carries out the reaction L-threonyl-[protein] + ATP = 3-O-(5'-adenylyl)-L-threonyl-[protein] + diphosphate. The catalysed reaction is L-tyrosyl-[protein] + ATP = O-(5'-adenylyl)-L-tyrosyl-[protein] + diphosphate. The enzyme catalyses L-histidyl-[protein] + UTP = N(tele)-(5'-uridylyl)-L-histidyl-[protein] + diphosphate. It catalyses the reaction L-seryl-[protein] + UTP = O-(5'-uridylyl)-L-seryl-[protein] + diphosphate. It carries out the reaction L-tyrosyl-[protein] + UTP = O-(5'-uridylyl)-L-tyrosyl-[protein] + diphosphate. Functionally, nucleotidyltransferase involved in the post-translational modification of proteins. It can catalyze the addition of adenosine monophosphate (AMP) or uridine monophosphate (UMP) to a protein, resulting in modifications known as AMPylation and UMPylation. The protein is Protein nucleotidyltransferase YdiU of Bacillus cereus (strain AH820).